A 277-amino-acid chain; its full sequence is Large ribosomal subunit protein uL2 (277 aa).

A disordered region spans residues 222 to 265 (GVAMNPIDHPHGGGEGRTSGGRHPVTPWGKPTKGKKTRTNKSTD).

It belongs to the universal ribosomal protein uL2 family. In terms of assembly, part of the 50S ribosomal subunit. Forms a bridge to the 30S subunit in the 70S ribosome.

Functionally, one of the primary rRNA binding proteins. Required for association of the 30S and 50S subunits to form the 70S ribosome, for tRNA binding and peptide bond formation. It has been suggested to have peptidyltransferase activity; this is somewhat controversial. Makes several contacts with the 16S rRNA in the 70S ribosome. This is Large ribosomal subunit protein uL2 from Bradyrhizobium sp. (strain BTAi1 / ATCC BAA-1182).